Here is a 789-residue protein sequence, read N- to C-terminus: Cadherin-10 (789 aa).

A signal peptide spans 1–22 (MTIQQVLLLLLLWMWLLHPCRT). Positions 23–54 (EMLFRRTPDLRPKGFVGRTSGSDGKALHRQKR) are excised as a propeptide. Cadherin domains lie at 55–160 (GWMW…EPTF), 161–269 (PEEI…PPRF), 270–384 (PQST…PPVF), 385–487 (SRSS…DNAP), and 488–606 (QFAV…LLLP). The Extracellular portion of the chain corresponds to 55–606 (GWMWNQFFLL…SCNAEALLLP (552 aa)). A glycan (N-linked (GlcNAc...) asparagine) is linked at asparagine 256. 3 N-linked (GlcNAc...) asparagine glycosylation sites follow: asparagine 438, asparagine 456, and asparagine 534. A helical membrane pass occupies residues 607 to 634 (AGLSTGALIAILLCIIILLVIVVLFAAL). Topologically, residues 635–789 (KRQRKKEPLI…GGGESDKDAS (155 aa)) are cytoplasmic.

The protein resides in the cell membrane. Functionally, cadherins are calcium-dependent cell adhesion proteins. They preferentially interact with themselves in a homophilic manner in connecting cells; cadherins may thus contribute to the sorting of heterogeneous cell types. The sequence is that of Cadherin-10 (CDH10) from Gallus gallus (Chicken).